We begin with the raw amino-acid sequence, 102 residues long: Aspartyl/glutamyl-tRNA(Asn/Gln) amidotransferase subunit C (102 aa).

This sequence belongs to the GatC family. In terms of assembly, heterotrimer of A, B and C subunits.

The enzyme catalyses L-glutamyl-tRNA(Gln) + L-glutamine + ATP + H2O = L-glutaminyl-tRNA(Gln) + L-glutamate + ADP + phosphate + H(+). It catalyses the reaction L-aspartyl-tRNA(Asn) + L-glutamine + ATP + H2O = L-asparaginyl-tRNA(Asn) + L-glutamate + ADP + phosphate + 2 H(+). Functionally, allows the formation of correctly charged Asn-tRNA(Asn) or Gln-tRNA(Gln) through the transamidation of misacylated Asp-tRNA(Asn) or Glu-tRNA(Gln) in organisms which lack either or both of asparaginyl-tRNA or glutaminyl-tRNA synthetases. The reaction takes place in the presence of glutamine and ATP through an activated phospho-Asp-tRNA(Asn) or phospho-Glu-tRNA(Gln). The protein is Aspartyl/glutamyl-tRNA(Asn/Gln) amidotransferase subunit C of Bordetella avium (strain 197N).